Here is a 229-residue protein sequence, read N- to C-terminus: Potassium/proton antiporter CemA (229 aa).

Transmembrane regions (helical) follow at residues 7–27 (LTPFPYLASIVFLPWGISLSF), 106–126 (LILHFSTNIICFTILSAYSIL), and 193–213 (LVSTFPVIIDTILKYWIFLFL).

It belongs to the CemA family.

It is found in the plastid. The protein localises to the chloroplast inner membrane. It catalyses the reaction K(+)(in) + H(+)(out) = K(+)(out) + H(+)(in). In terms of biological role, contributes to K(+)/H(+) antiport activity by supporting proton efflux to control proton extrusion and homeostasis in chloroplasts in a light-dependent manner to modulate photosynthesis. Prevents excessive induction of non-photochemical quenching (NPQ) under continuous-light conditions. Indirectly promotes efficient inorganic carbon uptake into chloroplasts. The protein is Potassium/proton antiporter CemA of Illicium oligandrum (Star anise).